Consider the following 396-residue polypeptide: Interleukin enhancer-binding factor 2 homolog (396 aa).

In terms of domain architecture, DZF spans 22–379; sequence KTFVPRHPFD…KKEGDLEEDI (358 aa). Residues 367 to 396 form a disordered region; it reads PTDKKEGDLEEDIDMIENENEEEGSDDGAE. The segment covering 374-396 has biased composition (acidic residues); that stretch reads DLEEDIDMIENENEEEGSDDGAE.

The protein localises to the nucleus. May regulate transcription of undefined genes. This chain is Interleukin enhancer-binding factor 2 homolog, found in Drosophila melanogaster (Fruit fly).